The primary structure comprises 288 residues: Polyisoprenoid diphosphate/phosphate phosphohydrolase PLPP6 (288 aa).

The segment at Met-1–Pro-82 is disordered. The Cytoplasmic segment spans residues Met-1–Pro-127. Residues Leu-128–Cys-148 traverse the membrane as a helical segment. Residues Leu-149 to Met-161 are Lumenal-facing. A helical membrane pass occupies residues Leu-162 to Val-182. The phosphatase sequence motif I stretch occupies residues Lys-179 to Pro-187. The Cytoplasmic segment spans residues Arg-183–His-223. The interval Pro-206 to His-209 is phosphatase sequence motif II. His-209 (proton donors) is an active-site residue. A helical transmembrane segment spans residues Leu-224 to Ser-244. Positions Ser-244 to Asp-255 are phosphatase sequence motif III. Over Arg-245–Asp-255 the chain is Lumenal. His-251 (nucleophile) is an active-site residue. The helical transmembrane segment at Val-256–Ser-276 threads the bilayer. The Cytoplasmic portion of the chain corresponds to Pro-277–His-288.

Belongs to the PA-phosphatase related phosphoesterase family.

It is found in the endoplasmic reticulum membrane. The protein localises to the nucleus envelope. Its subcellular location is the nucleus inner membrane. The enzyme catalyses presqualene diphosphate + H2O = presqualene phosphate + phosphate + H(+). The catalysed reaction is presqualene phosphate + H2O = presqualene alcohol + phosphate. It catalyses the reaction (2E,6E)-farnesyl diphosphate + H2O = (2E,6E)-farnesyl phosphate + phosphate + H(+). It carries out the reaction (2E,6E)-farnesyl phosphate + H2O = (2E,6E)-farnesol + phosphate. The enzyme catalyses (2E,6E,10E)-geranylgeranyl diphosphate + H2O = (2E,6E,10E)-geranylgeranyl phosphate + phosphate + H(+). The catalysed reaction is (2E,6E,10E)-geranylgeranyl phosphate + H2O = (2E,6E,10E)-geranylgeraniol + phosphate. It catalyses the reaction (2E)-geranyl diphosphate + H2O = (2E)-geranyl phosphate + phosphate + H(+). It carries out the reaction (2E)-geranyl phosphate + H2O = (2E)-geraniol + phosphate. The enzyme catalyses 1,2-dihexadecanoyl-sn-glycero-3-phosphate + H2O = 1,2-dihexadecanoyl-sn-glycerol + phosphate. Its function is as follows. Magnesium-independent polyisoprenoid diphosphatase that catalyzes the sequential dephosphorylation of presqualene, farnesyl, geranyl and geranylgeranyl diphosphates. May regulate the biosynthesis of cholesterol and related sterols by dephosphorylating presqualene and farnesyl diphosphate, two key intermediates in this biosynthetic pathway. May also play a role in protein prenylation by acting on farnesyl diphosphate and its derivative geranylgeranyl diphosphate, two precursors for the addition of isoprenoid anchors to membrane proteins. Has a lower activity towards phosphatidic acid (PA), but through phosphatidic acid dephosphorylation may participate in the biosynthesis of phospholipids and triacylglycerols. May also act on ceramide-1-P, lysophosphatidic acid (LPA) and sphing-4-enine 1-phosphate/sphingosine-1-phosphate. The protein is Polyisoprenoid diphosphate/phosphate phosphohydrolase PLPP6 (plpp6) of Danio rerio (Zebrafish).